The sequence spans 2313 residues: Histone-lysine N-methyltransferase Set2 (2313 aa).

6 disordered regions span residues methionine 1 to serine 115, alanine 179 to phenylalanine 442, glutamate 550 to lysine 858, arginine 883 to leucine 1106, glutamate 1118 to aspartate 1150, and lysine 1163 to arginine 1251. The segment at residues glycine 17–serine 29 is a DNA-binding region (a.T hook 1). The segment covering isoleucine 73 to asparagine 82 has biased composition (basic and acidic residues). A compositionally biased stretch (low complexity) spans serine 101–serine 115. The a.T hook 2 DNA-binding region spans proline 197–alanine 209. Low complexity predominate over residues serine 221–serine 241. Residues proline 252–leucine 265 show a composition bias toward basic residues. Low complexity predominate over residues glycine 266 to proline 288. A compositionally biased stretch (basic and acidic residues) spans glutamate 330 to glutamate 345. 3 stretches are compositionally biased toward acidic residues: residues glutamate 347–methionine 356, proline 365–methionine 375, and alanine 388–alanine 398. The residue at position 404 (threonine 404) is a Phosphothreonine. Residues alanine 412–arginine 433 are compositionally biased toward low complexity. A compositionally biased stretch (basic and acidic residues) spans proline 552 to glutamate 563. Over residues glutamate 659–aspartate 671 the composition is skewed to acidic residues. The span at cysteine 676–threonine 685 shows a compositional bias: polar residues. Basic and acidic residues-rich tracts occupy residues glutamate 689 to methionine 708, valine 719 to valine 732, valine 740 to lysine 749, and lysine 758 to alanine 782. 2 positions are modified to phosphoserine: serine 786 and serine 788. Composition is skewed to polar residues over residues alanine 800 to proline 833, lysine 918 to arginine 928, and leucine 938 to alanine 955. The span at lysine 959–proline 969 shows a compositional bias: basic residues. Positions serine 997–arginine 1010 are enriched in low complexity. Over residues threonine 1016–proline 1039 the composition is skewed to basic and acidic residues. Composition is skewed to low complexity over residues serine 1085 to serine 1097 and glutamate 1118 to serine 1127. The span at lysine 1163–alanine 1183 shows a compositional bias: basic and acidic residues. Low complexity predominate over residues threonine 1199 to proline 1213. In terms of domain architecture, AWS spans asparagine 1307–glutamine 1360. Zn(2+) is bound by residues cysteine 1312, cysteine 1314, cysteine 1328, cysteine 1332, cysteine 1341, cysteine 1345, and cysteine 1351. An SET domain is found at tryptophan 1362–glutamine 1479. Residues histidine 1415–tyrosine 1417 and asparagine 1440–histidine 1441 each bind S-adenosyl-L-methionine. Cysteine 1443 serves as a coordination point for Zn(2+). One can recognise a Post-SET domain in the interval aspartate 1486–glycine 1502. Glutamine 1488 contacts S-adenosyl-L-methionine. Residue cysteine 1490 participates in Zn(2+) binding. Tyrosine 1491 serves as a coordination point for S-adenosyl-L-methionine. Zn(2+) contacts are provided by cysteine 1492 and cysteine 1497. Disordered stretches follow at residues isoleucine 1501–valine 1598 and methionine 1763–leucine 1860. The span at proline 1505 to glutamate 1534 shows a compositional bias: acidic residues. Positions lysine 1539–alanine 1551 are enriched in basic residues. Basic and acidic residues-rich tracts occupy residues glutamine 1564 to alanine 1574, methionine 1763 to glutamine 1774, and glutamate 1784 to threonine 1806. Residues serine 1817–serine 1832 are compositionally biased toward polar residues. The span at threonine 1840–leucine 1860 shows a compositional bias: basic and acidic residues. Residues aspartate 1963 to proline 1996 enclose the WW domain. A phosphoserine mark is found at serine 2130 and serine 2131. The segment at leucine 2177–arginine 2218 is disordered. A compositionally biased stretch (basic residues) spans valine 2193–lysine 2206. A compositionally biased stretch (polar residues) spans serine 2207–serine 2216.

Belongs to the class V-like SAM-binding methyltransferase superfamily. Histone-lysine methyltransferase family. SET2 subfamily. As to quaternary structure, interacts with (phosphorylated) Polr2A.

Its subcellular location is the nucleus. The protein localises to the chromosome. It catalyses the reaction L-lysyl(36)-[histone H3] + 3 S-adenosyl-L-methionine = N(6),N(6),N(6)-trimethyl-L-lysyl(36)-[histone H3] + 3 S-adenosyl-L-homocysteine + 3 H(+). Functionally, histone methyltransferase that specifically trimethylates 'Lys-36' of histone H3 (H3K36me3). Represents the main enzyme generating H3K36me3, a specific tag for epigenetic transcriptional activation. Involved in dosage compensation in males (X chromosome dosage compensation) by mediating formation of H3K36me3, a mark recognized by msl-3 component of the MSL complex. In addition to its role in dosage compensation in males, promotes germline stem cell differentiation in females: catalyzes formation of H3K36me3, promoting recruitment of msl-3 and subsequent recruitment of the ATAC complex, leading to transcription of genes, such as RpS19b. The sequence is that of Histone-lysine N-methyltransferase Set2 from Drosophila melanogaster (Fruit fly).